A 240-amino-acid polypeptide reads, in one-letter code: tRNA pseudouridine synthase B (240 aa).

The Nucleophile role is filled by aspartate 48.

The protein belongs to the pseudouridine synthase TruB family. Type 1 subfamily.

The enzyme catalyses uridine(55) in tRNA = pseudouridine(55) in tRNA. In terms of biological role, responsible for synthesis of pseudouridine from uracil-55 in the psi GC loop of transfer RNAs. The sequence is that of tRNA pseudouridine synthase B from Bacteroides thetaiotaomicron (strain ATCC 29148 / DSM 2079 / JCM 5827 / CCUG 10774 / NCTC 10582 / VPI-5482 / E50).